Reading from the N-terminus, the 232-residue chain is Large ribosomal subunit protein uL1 (232 aa).

The protein belongs to the universal ribosomal protein uL1 family. In terms of assembly, part of the 50S ribosomal subunit.

Functionally, binds directly to 23S rRNA. The L1 stalk is quite mobile in the ribosome, and is involved in E site tRNA release. In terms of biological role, protein L1 is also a translational repressor protein, it controls the translation of the L11 operon by binding to its mRNA. The protein is Large ribosomal subunit protein uL1 of Bacteroides thetaiotaomicron (strain ATCC 29148 / DSM 2079 / JCM 5827 / CCUG 10774 / NCTC 10582 / VPI-5482 / E50).